Consider the following 162-residue polypeptide: uncharacterized protein (162 aa).

A helical transmembrane segment spans residues 7-27 (LGGVMLFAIVSLMVCGCMVVF).

Its subcellular location is the membrane. This is an uncharacterized protein from Methanocaldococcus jannaschii (strain ATCC 43067 / DSM 2661 / JAL-1 / JCM 10045 / NBRC 100440) (Methanococcus jannaschii).